Reading from the N-terminus, the 422-residue chain is Exodeoxyribonuclease 7 large subunit (422 aa).

The protein belongs to the XseA family. In terms of assembly, heterooligomer composed of large and small subunits.

The protein resides in the cytoplasm. The catalysed reaction is Exonucleolytic cleavage in either 5'- to 3'- or 3'- to 5'-direction to yield nucleoside 5'-phosphates.. In terms of biological role, bidirectionally degrades single-stranded DNA into large acid-insoluble oligonucleotides, which are then degraded further into small acid-soluble oligonucleotides. This chain is Exodeoxyribonuclease 7 large subunit, found in Leptospira borgpetersenii serovar Hardjo-bovis (strain JB197).